Reading from the N-terminus, the 875-residue chain is Serine/threonine-protein kinase ATG1 (875 aa).

The Protein kinase domain occupies 22–318 (YSIGPEIGKG…FNEFFNDPLI (297 aa)). Residues 28 to 36 (IGKGSFATV) and lysine 51 each bind ATP. The active-site Proton acceptor is aspartate 168. The span at 367 to 379 (EKSKQDLPAREVS) shows a compositional bias: basic and acidic residues. 2 disordered regions span residues 367-422 (EKSK…QPHN) and 470-515 (INPR…DRRI). Positions 380 to 389 (THASESQTKA) are enriched in polar residues. Basic and acidic residues predominate over residues 390-405 (VDTRPSSRDEEIKEII). 3 stretches are compositionally biased toward polar residues: residues 406 to 420 (NKNS…SIQP), 473 to 490 (RRTS…NNMQ), and 497 to 508 (LRSNSSGSQRRP).

Belongs to the protein kinase superfamily. Ser/Thr protein kinase family. APG1/unc-51/ULK1 subfamily. In terms of assembly, homodimer. Forms a ternary complex with ATG13 and ATG17.

The protein resides in the cytoplasm. The protein localises to the preautophagosomal structure membrane. It catalyses the reaction L-seryl-[protein] + ATP = O-phospho-L-seryl-[protein] + ADP + H(+). The catalysed reaction is L-threonyl-[protein] + ATP = O-phospho-L-threonyl-[protein] + ADP + H(+). In terms of biological role, serine/threonine protein kinase involved in the cytoplasm to vacuole transport (Cvt) and found to be essential in autophagy, where it is required for the formation of autophagosomes. Involved in the clearance of protein aggregates which cannot be efficiently cleared by the proteasome. Required for selective autophagic degradation of the nucleus (nucleophagy) as well as for mitophagy which contributes to regulate mitochondrial quantity and quality by eliminating the mitochondria to a basal level to fulfill cellular energy requirements and preventing excess ROS production. Also involved in endoplasmic reticulum-specific autophagic process, in selective removal of ER-associated degradation (ERAD) substrates. Plays a key role in ATG9 and ATG23 cycling through the pre-autophagosomal structure and is necessary to promote ATG18 binding to ATG9 through phosphorylation of ATG9. Catalyzes phosphorylation of ATG4, decreasing the interaction between ATG4 and ATG8 and impairing deconjugation of PE-conjugated forms of ATG8. In Debaryomyces hansenii (strain ATCC 36239 / CBS 767 / BCRC 21394 / JCM 1990 / NBRC 0083 / IGC 2968) (Yeast), this protein is Serine/threonine-protein kinase ATG1.